We begin with the raw amino-acid sequence, 201 residues long: Small ribosomal subunit protein uS4 (201 aa).

Residues 91–151 (SRLDNVVYRA…DKSINTLPFE (61 aa)) form the S4 RNA-binding domain.

The protein belongs to the universal ribosomal protein uS4 family. As to quaternary structure, part of the 30S ribosomal subunit. Contacts protein S5. The interaction surface between S4 and S5 is involved in control of translational fidelity.

In terms of biological role, one of the primary rRNA binding proteins, it binds directly to 16S rRNA where it nucleates assembly of the body of the 30S subunit. Its function is as follows. With S5 and S12 plays an important role in translational accuracy. The protein is Small ribosomal subunit protein uS4 of Mycolicibacterium gilvum (strain PYR-GCK) (Mycobacterium gilvum (strain PYR-GCK)).